We begin with the raw amino-acid sequence, 31 residues long: Photosystem II reaction center protein T (31 aa).

The chain crosses the membrane as a helical span at residues 3–23 (SFAYVLILTFAIATLFFAIAF).

Belongs to the PsbT family. As to quaternary structure, PSII is composed of 1 copy each of membrane proteins PsbA, PsbB, PsbC, PsbD, PsbE, PsbF, PsbH, PsbI, PsbJ, PsbK, PsbL, PsbM, PsbT, PsbX, PsbY, PsbZ, Psb30/Ycf12, peripheral proteins PsbO, CyanoQ (PsbQ), PsbU, PsbV and a large number of cofactors. It forms dimeric complexes.

The protein localises to the cellular thylakoid membrane. In terms of biological role, found at the monomer-monomer interface of the photosystem II (PS II) dimer, plays a role in assembly and dimerization of PSII. PSII is a light-driven water plastoquinone oxidoreductase, using light energy to abstract electrons from H(2)O, generating a proton gradient subsequently used for ATP formation. The chain is Photosystem II reaction center protein T from Synechococcus sp. (strain CC9902).